The primary structure comprises 366 residues: tRNA/tmRNA (uracil-C(5))-methyltransferase (366 aa).

Residues Gln-190, Tyr-218, Asn-223, Glu-239, and Asp-299 each coordinate S-adenosyl-L-methionine. The Nucleophile role is filled by Cys-324. Residue Glu-358 is the Proton acceptor of the active site.

This sequence belongs to the class I-like SAM-binding methyltransferase superfamily. RNA M5U methyltransferase family. TrmA subfamily.

The enzyme catalyses uridine(54) in tRNA + S-adenosyl-L-methionine = 5-methyluridine(54) in tRNA + S-adenosyl-L-homocysteine + H(+). It catalyses the reaction uridine(341) in tmRNA + S-adenosyl-L-methionine = 5-methyluridine(341) in tmRNA + S-adenosyl-L-homocysteine + H(+). In terms of biological role, dual-specificity methyltransferase that catalyzes the formation of 5-methyluridine at position 54 (m5U54) in all tRNAs, and that of position 341 (m5U341) in tmRNA (transfer-mRNA). This chain is tRNA/tmRNA (uracil-C(5))-methyltransferase, found in Salmonella paratyphi C (strain RKS4594).